Consider the following 833-residue polypeptide: Multiple RNA-binding domain-containing protein 1 (833 aa).

The 82-residue stretch at 2–83 (SRIIIKNIPR…SRIEVHRALD (82 aa)) folds into the RRM 1 domain. Residues 160–251 (ENEEVFDTEI…DAQAPLSDDE (92 aa)) form a disordered region. Basic and acidic residues-rich tracts occupy residues 188–205 (AAKR…HDST) and 213–222 (DGREKSSSEL). RRM domains lie at 323–401 (KRLF…PAKA), 506–578 (NVLL…KAPR), 619–702 (ATIY…LSHQ), and 721–798 (TKIL…YASN).

It belongs to the RRM MRD1 family.

Its subcellular location is the nucleus. Involved in pre-rRNA processing. The sequence is that of Multiple RNA-binding domain-containing protein 1 (mrd1) from Schizosaccharomyces pombe (strain 972 / ATCC 24843) (Fission yeast).